The following is a 459-amino-acid chain: Carbonic anhydrase 9 (459 aa).

An N-terminal signal peptide occupies residues 1–37; sequence MAPLCPSPWLPLLIPAPAPGLTVQLLLSLLLLVPVHP. Residues 38–112 are proteoglycan-like (PG); it reads QRLPRMQEDS…EEEGSLKLED (75 aa). Residues 38–414 are Extracellular-facing; sequence QRLPRMQEDS…QLNSCLAAGD (377 aa). The tract at residues 42–154 is disordered; that stretch reads RMQEDSPLGG…GDPPWPRVSP (113 aa). A compositionally biased stretch (acidic residues) spans 55-95; that stretch reads GEDDPLGEEDLPSEEDSPREEDPPGEEDLPGEEDLPGEEDL. The span at 96–112 shows a compositional bias: basic and acidic residues; it reads PEVKPKSEEEGSLKLED. Residue Thr115 is glycosylated (O-linked (GlcNAc...) threonine). A compositionally biased stretch (basic and acidic residues) spans 129–140; the sequence is AHRDKEGDDQSH. Positions 138–391 are catalytic; it reads QSHWRYGGDP…NGRVIEASFP (254 aa). Residues 139–390 form the Alpha-carbonic anhydrase domain; it reads SHWRYGGDPP…LNGRVIEASF (252 aa). An intrachain disulfide couples Cys156 to Cys336. Catalysis depends on His200, which acts as the Proton donor/acceptor. Zn(2+) is bound by residues His226, His228, and His251. 332-333 lines the substrate pocket; that stretch reads TT. An N-linked (GlcNAc...) asparagine glycan is attached at Asn346. A helical transmembrane segment spans residues 415 to 435; the sequence is ILALVFGLLFAVTSVAFLVQM. The Cytoplasmic segment spans residues 436-459; the sequence is RRQHRRGTKGGVSYRPAEVAETGA. Tyr449 bears the Phosphotyrosine mark.

This sequence belongs to the alpha-carbonic anhydrase family. As to quaternary structure, forms oligomers linked by disulfide bonds. It depends on Zn(2+) as a cofactor. In terms of processing, asn-346 bears high-mannose type glycan structures. In terms of tissue distribution, expressed primarily in carcinoma cells lines. Expression is restricted to very few normal tissues and the most abundant expression is found in the epithelial cells of gastric mucosa.

It is found in the nucleus. The protein resides in the nucleolus. Its subcellular location is the cell membrane. The protein localises to the cell projection. It localises to the microvillus membrane. The catalysed reaction is hydrogencarbonate + H(+) = CO2 + H2O. Its activity is regulated as follows. Inhibited by coumarins, saccharin, sulfonamide derivatives such as acetazolamide (AZA) and Foscarnet (phosphonoformate trisodium salt). In terms of biological role, catalyzes the interconversion between carbon dioxide and water and the dissociated ions of carbonic acid (i.e. bicarbonate and hydrogen ions). The sequence is that of Carbonic anhydrase 9 (CA9) from Homo sapiens (Human).